A 242-amino-acid polypeptide reads, in one-letter code: Haloacid dehalogenase-like hydrolase domain-containing protein 3 (242 aa).

It belongs to the HAD-like hydrolase superfamily.

The polypeptide is Haloacid dehalogenase-like hydrolase domain-containing protein 3 (hdhd3) (Danio rerio (Zebrafish)).